A 546-amino-acid chain; its full sequence is Cytokine-like nuclear factor N-PAC (546 aa).

The PWWP domain occupies 8–66; that stretch reads LGDLVWGKLGRYPPWPGKIVNPPKDLKKPRGKKCFFVKFFGTEDHAWIKVEQLKPYHAH. Basic and acidic residues-rich tracts occupy residues 91–145 and 161–181; these read RRAK…EGKK and RAQE…KDLT. A disordered region spans residues 91-187; that stretch reads RRAKGKDQTS…KDLTIPESST (97 aa). Position 130 is a phosphoserine (serine 130). A Glycyl lysine isopeptide (Lys-Gly) (interchain with G-Cter in SUMO2) cross-link involves residue lysine 135. At serine 166 the chain carries Phosphoserine. Residues 167-179 constitute a DNA-binding region (a.T hook); sequence PRKRGRPPKDEKD. Glycyl lysine isopeptide (Lys-Gly) (interchain with G-Cter in SUMO2) cross-links involve residues lysine 175, lysine 178, lysine 200, and lysine 210. The interval 213 to 216 is interaction with histone H3; the sequence is DPHF. The interaction with KDM1B stretch occupies residues 215-224; it reads HFHHFLLSQT. Residues lysine 226, lysine 236, lysine 239, and lysine 268 each participate in a glycyl lysine isopeptide (Lys-Gly) (interchain with G-Cter in SUMO2) cross-link. A dehydrogenase domain region spans residues 260-546; that stretch reads GSITPTDKKI…MSAVYRAYIH (287 aa). Position 270–284 (270–284) interacts with NAD(+); sequence GFLGLGLMGSGIVSN. Lysine 301 is covalently cross-linked (Glycyl lysine isopeptide (Lys-Gly) (interchain with G-Cter in SUMO2)). Residues threonine 355 and lysine 498 each coordinate NAD(+). At serine 533 the chain carries Phosphoserine.

Belongs to the HIBADH-related family. NP60 subfamily. In terms of assembly, homotetramere. Interacts with MAPK14. Interacts with KDM1B at nucleosomes; this interaction stimulates H3K4me1 and H3K4me2 demethylation. Binds to mononucleosomes. Interacts with GATA4; the interaction is required for a synergistic activation of GATA4 target genes transcription.

The protein resides in the nucleus. It is found in the chromosome. Cytokine-like nuclear factor with chromatin gene reader activity involved in chromatin modification and regulation of gene expression. Acts as a nucleosome-destabilizing factor that is recruited to genes during transcriptional activation. Recognizes and binds histone H3 without a preference for specific epigenetic markers and also binds DNA. Interacts with KDM1B and promotes its histone demethylase activity by facilitating the capture of H3 tails, they form a multifunctional enzyme complex that modifies transcribed chromatin and facilitates Pol II transcription through nucleosomes. Stimulates the acetylation of 'Lys-56' of nucleosomal histone H3 (H3K56ac) by EP300. With GATA4, co-binds a defined set of heart development genes and coregulates their expression during cardiomyocyte differentiation. Regulates p38 MAP kinase activity by mediating stress activation of MAPK14/p38alpha and specifically regulating MAPK14 signaling. Indirectly promotes phosphorylation of MAPK14 and activation of ATF2. The phosphorylation of MAPK14 requires upstream activity of MAP2K4 and MAP2K6. The chain is Cytokine-like nuclear factor N-PAC from Mus musculus (Mouse).